Reading from the N-terminus, the 184-residue chain is Photosystem I assembly protein Ycf4 (184 aa).

2 helical membrane-spanning segments follow: residues 21–43 (NYFWATVVFLGSLGFFIVGVSSY) and 63–85 (GIVMCFYGIAGLFLSFYLWFTIF).

Belongs to the Ycf4 family.

It localises to the plastid. The protein localises to the chloroplast thylakoid membrane. Functionally, seems to be required for the assembly of the photosystem I complex. In Chaetosphaeridium globosum (Charophycean green alga), this protein is Photosystem I assembly protein Ycf4.